Consider the following 231-residue polypeptide: Nitrate reductase [NAD(P)H] (231 aa).

Residues 1-85 form the FAD-binding FR-type domain; the sequence is PQKLGLPVGR…KGPHRHIEYT (85 aa). FAD-binding positions include 25–28, 42–46, Phe47, 59–61, and Thr112; these read RAYT, LIKIY, and LMS.

The protein belongs to the nitrate reductase family. As to quaternary structure, homodimer. FAD is required as a cofactor. The cofactor is heme. It depends on Mo-molybdopterin as a cofactor.

It catalyses the reaction nitrite + NAD(+) + H2O = nitrate + NADH + H(+). The catalysed reaction is nitrite + NADP(+) + H2O = nitrate + NADPH + H(+). Its function is as follows. Nitrate reductase is a key enzyme involved in the first step of nitrate assimilation in plants, fungi and bacteria. The protein is Nitrate reductase [NAD(P)H] (NAR) of Zea mays (Maize).